We begin with the raw amino-acid sequence, 637 residues long: MTYHFTEEYDIIVIGAGHAGVEASLAASRMGCKVLLATINIEMLAFMPCNPSIGGSAKGIVVREVDALGGEMAKTIDKTYIQMKMLNTGKGPAVRALRAQADKELYSKEMRKTVENQENLTLRQTMIDEILVEDGKVVGVRTATHQEYAAKAVIVTTGTALRGEIIIGDLKYSSGPNHSLASINLADNLKELGLEIGRFKTGTPPRVKASSINYDVTEIQPGDEVPNHFSYTSRDEDYVKDQVPCWLTYTNGTSHEIIQNNLHRAPMFTGVVKGVGPRYCPSIEDKIVRFADKERHQLFLEPEGRNTEEVYVQGLSTSLPEDVQRDLVHSIKGLENAEMMRTGYAIEYDMVLPHQLRATLETKKISGLFTAGQTNGTSGYEEAAGQGIIAGINAALKIQGKPELILKRSDGYIGVMIDDLVTKGTIEPYRLLTSRAEYRLILRHDNADMRLTEMGREIGLVDDERWARFEIKKNQFDNEMKRLDSIKLKPVKETNAKVEEMGFKPLTDAVTAKEFLRRPEVSYQDVVAFIGPAAEDLDDKIIELIETEIKYEGYISKAMDQVAKMKRMEEKRIPANIDWDDIDSIATEARQKFKLINPETIGQASRISGVNPADISILMVYLEGKNRSISKTLQKSK.

FAD-binding positions include 15-20 (GAGHAG), Ile-127, and Ser-182. Residue 276–290 (GPRYCPSIEDKIVRF) participates in NAD(+) binding. Residue Gln-373 participates in FAD binding.

This sequence belongs to the MnmG family. As to quaternary structure, homodimer. Heterotetramer of two MnmE and two MnmG subunits. The cofactor is FAD.

It is found in the cytoplasm. NAD-binding protein involved in the addition of a carboxymethylaminomethyl (cmnm) group at the wobble position (U34) of certain tRNAs, forming tRNA-cmnm(5)s(2)U34. The protein is tRNA uridine 5-carboxymethylaminomethyl modification enzyme MnmG of Streptococcus pneumoniae serotype 4 (strain ATCC BAA-334 / TIGR4).